The sequence spans 78 residues: Surfactant-associated protein 2 (78 aa).

The first 19 residues, 1-19 (MGAGLPLVLLLTLVGSSQG), serve as a signal peptide directing secretion. N-linked (GlcNAc...) asparagine glycosylation is present at Asn37.

Post-translationally, N-glycosylated.

It is found in the secreted. Its subcellular location is the cytoplasmic vesicle. The protein localises to the secretory vesicle. The protein resides in the golgi apparatus. In terms of biological role, putative surfactant protein. This chain is Surfactant-associated protein 2 (SFTA2), found in Bos taurus (Bovine).